The chain runs to 135 residues: Large ribosomal subunit protein uL16c (135 aa).

This sequence belongs to the universal ribosomal protein uL16 family. As to quaternary structure, part of the 50S ribosomal subunit.

The protein localises to the plastid. The protein resides in the chloroplast. This Oenothera argillicola (Appalachian evening primrose) protein is Large ribosomal subunit protein uL16c.